Consider the following 274-residue polypeptide: S-methyl-5'-thioadenosine phosphorylase (274 aa).

Phosphate-binding positions include S20, 62–63 (RH), and 95–96 (SA). Residue M194 participates in substrate binding. T195 is a binding site for phosphate. 218–220 (DYD) is a substrate binding site.

This sequence belongs to the PNP/MTAP phosphorylase family. MTAP subfamily. In terms of assembly, homohexamer. Dimer of a homotrimer.

It carries out the reaction S-methyl-5'-thioadenosine + phosphate = 5-(methylsulfanyl)-alpha-D-ribose 1-phosphate + adenine. The protein operates within amino-acid biosynthesis; L-methionine biosynthesis via salvage pathway; S-methyl-5-thio-alpha-D-ribose 1-phosphate from S-methyl-5'-thioadenosine (phosphorylase route): step 1/1. In terms of biological role, catalyzes the reversible phosphorylation of S-methyl-5'-thioadenosine (MTA) to adenine and 5-methylthioribose-1-phosphate. Involved in the breakdown of MTA, a major by-product of polyamine biosynthesis. Responsible for the first step in the methionine salvage pathway after MTA has been generated from S-adenosylmethionine. Has broad substrate specificity with 6-aminopurine nucleosides as preferred substrates. In Hyperthermus butylicus (strain DSM 5456 / JCM 9403 / PLM1-5), this protein is S-methyl-5'-thioadenosine phosphorylase.